A 646-amino-acid chain; its full sequence is WW domain-containing adapter protein with coiled-coil (646 aa).

A disordered region spans residues 1-138 (MVMYARKQQR…YDSADDWSEH (138 aa)). Residues 23–37 (QPFQALKYSSKSHPS) are compositionally biased toward polar residues. Over residues 38–50 (SGDHRHEKMRDAA) the composition is skewed to basic and acidic residues. At serine 53 the chain carries Phosphoserine. A compositionally biased stretch (polar residues) spans 61–75 (RSNSPENKYSDSTGH). The segment covering 103–122 (NHSALHSSNSHSSNPSNNPS) has biased composition (low complexity). The region spanning 129–162 (YDSADDWSEHISSSGKKYYYNCRTEVSQWEKPKE) is the WW domain. Serine 131 and serine 142 each carry phosphoserine. 2 stretches are compositionally biased toward basic and acidic residues: residues 158–174 (EKPK…KEAN) and 182–191 (PKDRDYRREV). Disordered stretches follow at residues 158–352 (EKPK…PQST) and 428–541 (TQAQ…TATV). Over residues 211–225 (DASSLLPQNILSQTS) the composition is skewed to polar residues. Serine 225 is modified (phosphoserine). Basic and acidic residues predominate over residues 226–239 (RHNDKDYRLPRAET). A compositionally biased stretch (low complexity) spans 252–267 (PVVHPTATPSTVPSSP). Residues 284-300 (GASTLSKLPTPTASLPA) show a composition bias toward polar residues. At threonine 293 the chain carries Phosphothreonine. The residue at position 302 (lysine 302) is an N6-acetyllysine. Positions 316–331 (SHSCTTPSTSSASGLN) are enriched in polar residues. Low complexity predominate over residues 332-351 (PTSAPPTSASAVPVSPVPQS). Positions 428 to 463 (TQAQPSNQSPMSLTSDASSPRSYVSPRISTPQTNTV) are enriched in polar residues. Serine 446 carries the post-translational modification Phosphoserine. Threonine 471 carries the phosphothreonine modification. The span at 490 to 503 (VSHSATQQPVTADK) shows a compositional bias: polar residues. Phosphoserine occurs at positions 511, 523, and 525. A compositionally biased stretch (low complexity) spans 511–524 (SPRSLQRLSSQRSP). Residues 528–541 (PNHTCSSNASTATV) show a composition bias toward polar residues. A coiled-coil region spans residues 617 to 643 (QATLREQRILFLRQQIKELEKLKNQNS).

In terms of assembly, interacts (via coiled coil domain) with RNF20, RNF40 and UBE2A. Interacts (via WW domain) with RNA polymerase II. Interacts with MTOR and other components of the MTOR pathway including RPTOR, RUVBL1, RUVBL2, TTI1 and TTI2. Phosphorylated on tyrosine residues.

The protein resides in the nucleus speckle. Its subcellular location is the nucleus. Acts as a linker between gene transcription and histone H2B monoubiquitination at 'Lys-120' (H2BK120ub1). Interacts with the RNA polymerase II transcriptional machinery via its WW domain and with RNF20-RNF40 via its coiled coil region, thereby linking and regulating H2BK120ub1 and gene transcription. Regulates the cell-cycle checkpoint activation in response to DNA damage. Positive regulator of amino acid starvation-induced autophagy. Also acts as a negative regulator of basal autophagy. Positively regulates MTOR activity by promoting, in an energy-dependent manner, the assembly of the TTT complex composed of TELO2, TTI1 and TTI2 and the RUVBL complex composed of RUVBL1 and RUVBL2 into the TTT-RUVBL complex. This leads to the dimerization of the mTORC1 complex and its subsequent activation. May negatively regulate the ubiquitin proteasome pathway. The protein is WW domain-containing adapter protein with coiled-coil (Wac) of Mus musculus (Mouse).